Consider the following 241-residue polypeptide: Microneme antigen (241 aa).

Positions 1–34 (MRLPIRFPKYVLYGMASAVWSILFLHILVGDTMS) are cleaved as a signal peptide. Positions 35 to 103 (AADALSWSGG…ATGRGPSFVH (69 aa)) are excised as a propeptide. The span at 61–83 (HEMGKELEQQHGAEEQQMQRDTK) shows a compositional bias: basic and acidic residues. The disordered stretch occupies residues 61–92 (HEMGKELEQQHGAEEQQMQRDTKPAAFSNPPH). PAN domains lie at 112–181 (CFPH…PRSC) and 185–241 (CTDN…FNKS). Intrachain disulfides connect C112-C181, C137-C159, C141-C147, C185-C189, C210-C230, and C214-C220. A carbohydrate is bound at residue S121. A carbohydrate-binding residues include K162, Y169, and D174.

The protein belongs to the microneme antigen family. As to quaternary structure, homodimer or heterodimer of major microneme antigen and microneme antigen. Contains six disulfide bonds.

The protein localises to the cytoplasmic vesicle. The protein resides in the secretory vesicle. It localises to the microneme. In terms of biological role, galactose-binding lectin. Plays a role in adhesion to the host cell. Has a potential role in invasion of host cells. This is Microneme antigen from Sarcocystis muris.